The following is a 977-amino-acid chain: Ubiquitin-like modifier-activating enzyme 7 (977 aa).

It belongs to the ubiquitin-activating E1 family. In terms of processing, ubiquitinated by RNF170.

It is found in the cytoplasm. It localises to the nucleus. It functions in the pathway protein modification; protein ubiquitination. Its function is as follows. E1-activating enzyme that catalyzes the covalent conjugation of the ubiquitin-like protein product of ISG15 to additional interferons stimulated proteins (ISGs) as well as other cellular proteins such as P53 in a process termed protein ISGylation. Plays an essential role in antiviral immunity together with ISG15 by restricting the replication of many viruses including rabies virus, influenza virus, sindbis virus or rotavirus. The protein is Ubiquitin-like modifier-activating enzyme 7 of Mus musculus (Mouse).